A 614-amino-acid chain; its full sequence is Phosphomethylpyrimidine synthase (614 aa).

A compositionally biased stretch (low complexity) spans 1–16 (MNAQLSALQQQAQQLS). The disordered stretch occupies residues 1–36 (MNAQLSALQQQAQQLSESVTRPIPGSRKIHVPGSRP). Substrate-binding positions include Asn-230, Met-259, Tyr-288, His-324, 344–346 (SRG), 385–388 (DGLR), and Glu-424. Position 428 (His-428) interacts with Zn(2+). Tyr-451 contributes to the substrate binding site. Position 492 (His-492) interacts with Zn(2+). Cys-572, Cys-575, and Cys-580 together coordinate [4Fe-4S] cluster.

This sequence belongs to the ThiC family. In terms of assembly, homodimer. It depends on [4Fe-4S] cluster as a cofactor.

It carries out the reaction 5-amino-1-(5-phospho-beta-D-ribosyl)imidazole + S-adenosyl-L-methionine = 4-amino-2-methyl-5-(phosphooxymethyl)pyrimidine + CO + 5'-deoxyadenosine + formate + L-methionine + 3 H(+). The protein operates within cofactor biosynthesis; thiamine diphosphate biosynthesis. Its function is as follows. Catalyzes the synthesis of the hydroxymethylpyrimidine phosphate (HMP-P) moiety of thiamine from aminoimidazole ribotide (AIR) in a radical S-adenosyl-L-methionine (SAM)-dependent reaction. The polypeptide is Phosphomethylpyrimidine synthase (Stenotrophomonas maltophilia (strain R551-3)).